Reading from the N-terminus, the 218-residue chain is Large ribosomal subunit protein bL25 (218 aa).

2 disordered regions span residues 1–20 (MKTH…GPAR) and 185–218 (PTAA…ASEE). Acidic residues predominate over residues 192–218 (EEGEEGEEGEEGGEGGEAEGAEAASEE).

The protein belongs to the bacterial ribosomal protein bL25 family. CTC subfamily. Part of the 50S ribosomal subunit; part of the 5S rRNA/L5/L18/L25 subcomplex. Contacts the 5S rRNA. Binds to the 5S rRNA independently of L5 and L18.

This is one of the proteins that binds to the 5S RNA in the ribosome where it forms part of the central protuberance. This chain is Large ribosomal subunit protein bL25, found in Desulfatibacillum aliphaticivorans.